A 309-amino-acid polypeptide reads, in one-letter code: ATP synthase gamma chain (309 aa).

This sequence belongs to the ATPase gamma chain family. F-type ATPases have 2 components, CF(1) - the catalytic core - and CF(0) - the membrane proton channel. CF(1) has five subunits: alpha(3), beta(3), gamma(1), delta(1), epsilon(1). CF(0) has three main subunits: a, b and c.

It is found in the cell membrane. Its function is as follows. Produces ATP from ADP in the presence of a proton gradient across the membrane. The gamma chain is believed to be important in regulating ATPase activity and the flow of protons through the CF(0) complex. This chain is ATP synthase gamma chain, found in Salinispora tropica (strain ATCC BAA-916 / DSM 44818 / JCM 13857 / NBRC 105044 / CNB-440).